We begin with the raw amino-acid sequence, 507 residues long: ATP-dependent RNA helicase DDX47 (507 aa).

A compositionally biased stretch (acidic residues) spans 1–31 (MSETSEDEQTQLQTSDEEEDLGSEEEQEDED). Residues 1–58 (MSETSEDEQTQLQTSDEEEDLGSEEEQEDEDNNHKEGDSEAALSGEDDKGSEDDAAEE) are disordered. The Q motif signature appears at 61–89 (LTWKDLGLNEALCQACDELKWKAPSKIQR). The 172-residue stretch at 92-263 (IPVALQGKDV…RASLKDPVKV (172 aa)) folds into the Helicase ATP-binding domain. 105–112 (AETGSGKT) is an ATP binding site. The DEAD box motif lies at 211-214 (DEAD). Positions 290-434 (YLVHILNELA…LYKCEEDEVM (145 aa)) constitute a Helicase C-terminal domain. Residues 426 to 453 (YKCEEDEVMALQERVAEAQRTAKLELKD) adopt a coiled-coil conformation. Positions 451 to 471 (LKDLEDTRGGHKRGGDTHDDS) are enriched in basic and acidic residues. Residues 451 to 507 (LKDLEDTRGGHKRGGDTHDDSENFTGARKRMKPMGGTGGGGRKSFGKKNWSKGKQKR) are disordered. Over residues 494 to 507 (SFGKKNWSKGKQKR) the composition is skewed to basic residues.

Belongs to the DEAD box helicase family. DDX47/RRP3 subfamily.

The protein resides in the nucleus. Its subcellular location is the nucleolus. It carries out the reaction ATP + H2O = ADP + phosphate + H(+). Functionally, part of a translational control module, also containing ath/DHX33 and ais/DDX52, which coordinates germline stem cell differentiation with ribosome biogenesis during oogenesis. This module allows for coregulation of ribosomal proteins and non1/GTPBP4, a p53 repressor, preventing p53 stabilization, cell cycle arrest and loss of stem cell differentiation. With atos, adjusts transcription and translation of a subset of OXPHOS genes in macrophages to increase mitochondrial bioenergetics and allow tissue invasion. The chain is ATP-dependent RNA helicase DDX47 from Drosophila melanogaster (Fruit fly).